Here is a 230-residue protein sequence, read N- to C-terminus: MKLIVGIGGMTNGGKTTLTNSLLRALPNCCVIHQDDFFKPQDQIAVGEDGFKQWDVLESLDMEAMLDTVQAWLSSPQKFARAHGVSVQPEASDTHILLLEGFLLYSYKPLVDLYSRRYFLTVPYEECKWRRSTRNYTVPDPPGLFDGHVWPMYQKYRQEMEANGVEVVYLDGMKSREELFREVLEDIQNSLLNRSQESAPSPARPARTQGPGRGCGHRTARPAASQQDSM.

Residue 9-17 (GMTNGGKTT) coordinates ATP. Residues Thr16 and Asp35 each contribute to the Mg(2+) site. The active-site Proton acceptor is the Asp35. Substrate is bound by residues 35-38 (DDFF) and 54-55 (WD). Residue Arg130 participates in ATP binding. Residues Arg131 and 136-137 (YT) each bind substrate. Residues 134-136 (RNY) and 174-176 (KSR) contribute to the ATP site. Positions 191–230 (LLNRSQESAPSPARPARTQGPGRGCGHRTARPAASQQDSM) are disordered.

Belongs to the uridine kinase family. NRK subfamily. In terms of assembly, monomer. Interacts with ITGB1 alone or when associated with alpha-7, but not with alpha-5. As to expression, predominantly expressed in skeletal muscle and, at a much lower level, in the heart (at protein level). No expression in brain, kidney, liver, lung, pancreas nor placenta.

It carries out the reaction beta-nicotinamide D-riboside + ATP = beta-nicotinamide D-ribonucleotide + ADP + H(+). The enzyme catalyses beta-D-ribosylnicotinate + ATP = nicotinate beta-D-ribonucleotide + ADP + H(+). It functions in the pathway cofactor biosynthesis; NAD(+) biosynthesis. In terms of biological role, catalyzes the phosphorylation of nicotinamide riboside (NR) and nicotinic acid riboside (NaR) to form nicotinamide mononucleotide (NMN) and nicotinic acid mononucleotide (NaMN). Reduces laminin matrix deposition and cell adhesion to laminin, but not to fibronectin. Involved in the regulation of PXN at the protein level and of PXN tyrosine phosphorylation. May play a role in the regulation of terminal myogenesis. The protein is Nicotinamide riboside kinase 2 (NMRK2) of Homo sapiens (Human).